Reading from the N-terminus, the 566-residue chain is Putative ABC transporter ATP-binding protein BCE_2668 (566 aa).

ABC transporter domains are found at residues 5-246 (ISFE…GLRE) and 300-533 (LKVE…ANLK). ATP contacts are provided by residues 39–46 (GRSGSGKS) and 333–340 (GHNGAGKS).

This sequence belongs to the ABC transporter superfamily.

The protein resides in the cell membrane. Probably part of an ABC transporter complex. Responsible for energy coupling to the transport system. In Bacillus cereus (strain ATCC 10987 / NRS 248), this protein is Putative ABC transporter ATP-binding protein BCE_2668.